Reading from the N-terminus, the 232-residue chain is Clarin-1 (232 aa).

The helical transmembrane segment at 8-28 threads the bilayer; the sequence is IIFCMAGVLSFLCALGVVTAV. Residue N48 is glycosylated (N-linked (GlcNAc...) asparagine). 2 consecutive transmembrane segments (helical) span residues 101 to 121 and 135 to 155; these read IILF…FFMY and LGLY…MILF. N184 is a glycosylation site (N-linked (GlcNAc...) asparagine). Residues 186–206 form a helical membrane-spanning segment; it reads TTSFWVVFICFFVHFLNGLLI.

The protein belongs to the clarin family.

It is found in the cell membrane. Its function is as follows. May have a role in the excitatory ribbon synapse junctions between hair cells and cochlear ganglion cells and presumably also in analogous synapses within the retina. The chain is Clarin-1 (Clrn1) from Mus musculus (Mouse).